We begin with the raw amino-acid sequence, 687 residues long: MAEELVLERCDLELEANGRDHHTADLCRERLVVRRGQPFWLTLHFEGRNYEASVDSLTFCAVTGPDPSEEAGTKALFRLSDATEEGAWAAVAADQRDSTLSLHLSTPANAPVGHYRLSLEASTGYQGSSFMLGQFTLLFNSWCPADAVYLDSDEERQEYVLTQQGFIYQGSAKFIKNIPWNFGQFEEGILDICLMLLDVNPKFLRNAGRDCSRRSSPVYVGRVVSGMVNCNDDQGVLLGRWDNNYADGISPMSWIGSVDILRRWKRDGCQRVKYGQCWVFAAVACTVLRCLGIPTRVVTNYNSAHDQNSNLLIEYFRNEFGEIQSDKSEMIWNFHCWVESWMTRPDLQPGYEGWQALDPTPQEKSEGTYCCGPVPVRAIKEGDLSTKYDAPFVFAEVNADVVDWIRQDDGSLHKSINHSLVVGLKISTKCVGRDDREDITHSYKYPEGSPEEREAFTRANHLNKLVNKEETGVAMRIRVGEGMNRGCDFDVFAHITNSTPEEHTGRLLLCARTVSYNGILGPECGTKDLLSLSLEPYSEKSIPLRILYEKYCDCLTESNLIKVRGLLIEPAANSYLLAERDIYLENPEIKIRILGEPKQNRKLVAEISLQNPLTVALSGCTFTVEGAGLIEEQKTVDVPDPVEAGEEVKVRVDLLPLYVGRHKLVVNFESDRLKAVKGFRNVIVGPS.

A2 is subject to N-acetylalanine. 2 disulfides stabilise this stretch: C230–C370 and C370–C371. Catalysis depends on residues C277, H335, and D358. Residues N398, D400, E437, E447, and E452 each coordinate Ca(2+). N6-acetyllysine is present on K468. GTP is bound at residue 476-483; that stretch reads RIRVGEGM. Ca(2+) is bound at residue E539. 580–583 is a binding site for GTP; that stretch reads RDIY. Residue Q633 forms an Isoglutamyl lysine isopeptide (Gln-Lys) (interchain with K-?) linkage.

It belongs to the transglutaminase superfamily. Transglutaminase family. Monomer. Interacts with phospholipase C; promoting alpha-1 adrenergic receptor signaling. Interacts with PLCD1. Requires Ca(2+) as cofactor. Post-translationally, disulfide bond formation inactivates the calcium-dependent acyltransferase activity. Cys-370 can form disulfide bonds with both Cys-230 and Cys-371: formation of a disulfide bond between Cys-230 and Cys-370 facilitates formation of the disulfide between Cys-370 and Cys-371, which promotes inactivation of the acyltransferase activity. May also form interchain disulfids between Cys-230 and Cys-370. Ca(2+) protects against disulfide bond formation and inactivation. In terms of processing, auto-transglutaminated: Forms covalent cross-links mediated by transglutaminase between Gln-633 and the epsilon-amino group of a lysine residue of itself or HMGB1, forming homopolymers and heteropolymers, respectively. S-nitrosylated, leading to inactivation of the acyltransferase activity. As to expression, highest levels are detected in the lung. Lower levels are found in the liver, spleen and heart, but not in the brain.

Its subcellular location is the cytoplasm. The protein localises to the cytosol. It is found in the nucleus. It localises to the chromosome. The protein resides in the secreted. Its subcellular location is the extracellular space. The protein localises to the extracellular matrix. It is found in the cell membrane. It localises to the mitochondrion. The enzyme catalyses L-glutaminyl-[protein] + L-lysyl-[protein] = [protein]-L-lysyl-N(6)-5-L-glutamyl-[protein] + NH4(+). The catalysed reaction is L-glutaminyl-[protein] + serotonin = 5-serotonyl-L-glutamyl-[protein] + NH4(+). It carries out the reaction L-glutaminyl-[protein] + dopamine = 5-dopaminyl-L-glutamyl-[protein] + NH4(+). It catalyses the reaction L-glutaminyl-[protein] + histamine = 5-histaminyl-L-glutamyl-[protein] + NH4(+). The enzyme catalyses L-glutaminyl-[protein] + (R)-noradrenaline = 5-(R)-noradrenalinyl-L-glutamyl-[protein] + NH4(+). The catalysed reaction is L-glutaminyl-[protein] + H2O = L-glutamyl-[protein] + NH4(+). Its activity is regulated as follows. Acyltransferase activity is regulated by the binding of GTP and Ca(2+): inactivated by GTP, which stabilizes its closed structure, thereby obstructing the accessibility of substrates to the active sites. In contrast, Ca(2+) acts as a cofactor by inducing conformational change to the active open form. In absence of Ca(2+), Mg(2+) may bind Ca(2+)-binding sites, promoting GTP-binding and subsequent inhibition of the acyltransferase activity. Extracellularly reduced and activated by CLIC3. In terms of biological role, calcium-dependent acyltransferase that catalyzes the formation of covalent bonds between peptide-bound glutamine and various primary amines, such as gamma-amino group of peptide-bound lysine, or mono- and polyamines, thereby producing cross-linked or aminated proteins, respectively. Involved in many biological processes, such as bone development, angiogenesis, wound healing, cellular differentiation, chromatin modification and apoptosis. Acts as a protein-glutamine gamma-glutamyltransferase by mediating the cross-linking of proteins, such as ACO2, HSPB6, FN1, HMGB1, RAP1GDS1, SLC25A4/ANT1, SPP1 and WDR54. Under physiological conditions, the protein cross-linking activity is inhibited by GTP; inhibition is relieved by Ca(2+) in response to various stresses. When secreted, catalyzes cross-linking of proteins of the extracellular matrix, such as FN1 and SPP1 resulting in the formation of scaffolds. Plays a key role during apoptosis, both by (1) promoting the cross-linking of cytoskeletal proteins resulting in condensation of the cytoplasm, and by (2) mediating cross-linking proteins of the extracellular matrix, resulting in the irreversible formation of scaffolds that stabilize the integrity of the dying cells before their clearance by phagocytosis, thereby preventing the leakage of harmful intracellular components. In addition to protein cross-linking, can use different monoamine substrates to catalyze a vast array of protein post-translational modifications: mediates aminylation of serotonin, dopamine, noradrenaline or histamine into glutamine residues of target proteins to generate protein serotonylation, dopaminylation, noradrenalinylation or histaminylation, respectively. Mediates protein serotonylation of small GTPases during activation and aggregation of platelets, leading to constitutive activation of these GTPases. Plays a key role in chromatin organization by mediating serotonylation and dopaminylation of histone H3. Catalyzes serotonylation of 'Gln-5' of histone H3 (H3Q5ser) during serotonergic neuron differentiation, thereby facilitating transcription. Acts as a mediator of neurotransmission-independent role of nuclear dopamine in ventral tegmental area (VTA) neurons: catalyzes dopaminylation of 'Gln-5' of histone H3 (H3Q5dop), thereby regulating relapse-related transcriptional plasticity in the reward system. Regulates vein remodeling by mediating serotonylation and subsequent inactivation of ATP2A2/SERCA2. Also acts as a protein deamidase by mediating the side chain deamidation of specific glutamine residues of proteins to glutamate. Catalyzes specific deamidation of protein gliadin, a component of wheat gluten in the diet. May also act as an isopeptidase cleaving the previously formed cross-links. Also able to participate in signaling pathways independently of its acyltransferase activity: acts as a signal transducer in alpha-1 adrenergic receptor-mediated stimulation of phospholipase C-delta (PLCD) activity and is required for coupling alpha-1 adrenergic agonists to the stimulation of phosphoinositide lipid metabolism. This Bos taurus (Bovine) protein is Protein-glutamine gamma-glutamyltransferase 2.